Consider the following 71-residue polypeptide: Plasticin-C1 (71 aa).

An N-terminal signal peptide occupies residues 1–22; that stretch reads MAFLKKSLLLVLFLGLVSLSIC. The propeptide occupies 23–45; the sequence is EEEKRENEDEEKQEDDDQSENKR. Residues 25-46 form a disordered region; it reads EKRENEDEEKQEDDDQSENKRG. Over residues 30 to 40 the composition is skewed to acidic residues; it reads EDEEKQEDDDQ. Asparagine 68 is subject to Asparagine amide. Positions 70 to 71 are excised as a propeptide; the sequence is ES.

This sequence belongs to the frog skin active peptide (FSAP) family. Plasticin subfamily. As to expression, expressed by the skin glands.

It is found in the secreted. The protein resides in the target cell membrane. Its function is as follows. Neutral peptide with no antimicrobial activity. May act in synergy with cationic peptides by enhancing their activity. Has a moderate hemolytic activity. This Agalychnis callidryas (Red-eyed tree frog) protein is Plasticin-C1.